A 377-amino-acid polypeptide reads, in one-letter code: UDP-N-acetylglucosamine 2-epimerase (377 aa).

Histidine 212 is an active-site residue.

This sequence belongs to the UDP-N-acetylglucosamine 2-epimerase family. In terms of assembly, homodimer.

The catalysed reaction is UDP-N-acetyl-alpha-D-glucosamine + H2O = aldehydo-N-acetyl-D-mannosamine + UDP + H(+). In terms of biological role, catalyzes the conversion of UDP-N-acetylglucosamine (UDP-GlcNAc) to UDP and N-acetyl-D-mannosamine (ManNAc). The protein is UDP-N-acetylglucosamine 2-epimerase (siaA) of Neisseria meningitidis serogroup B (strain ATCC BAA-335 / MC58).